A 278-amino-acid chain; its full sequence is HTH-type transcriptional regulator HdfR (278 aa).

The HTH lysR-type domain maps to 1–58; it reads MDTELLKTFLEVSRTRHFGRAAEALYLTQSAVSFRIRQLENQLGVNLFTRHRNNIRLT. A DNA-binding region (H-T-H motif) is located at residues 18–37; that stretch reads FGRAAEALYLTQSAVSFRIR.

It belongs to the LysR transcriptional regulatory family.

Functionally, negatively regulates the transcription of the flagellar master operon flhDC by binding to the upstream region of the operon. This is HTH-type transcriptional regulator HdfR from Salmonella schwarzengrund (strain CVM19633).